The chain runs to 115 residues: NADH-ubiquinone oxidoreductase chain 3 (115 aa).

Helical transmembrane passes span 3 to 23 (LILTLLINTLLSSVLVLIAFW), 55 to 75 (FFLVAITFLLFDLEIALLLPL), and 86 to 106 (TMLTMALILISLLAASLAYEW).

It belongs to the complex I subunit 3 family. As to quaternary structure, core subunit of respiratory chain NADH dehydrogenase (Complex I) which is composed of 45 different subunits. Interacts with TMEM186. Interacts with TMEM242.

The protein localises to the mitochondrion inner membrane. It carries out the reaction a ubiquinone + NADH + 5 H(+)(in) = a ubiquinol + NAD(+) + 4 H(+)(out). Its function is as follows. Core subunit of the mitochondrial membrane respiratory chain NADH dehydrogenase (Complex I) which catalyzes electron transfer from NADH through the respiratory chain, using ubiquinone as an electron acceptor. Essential for the catalytic activity of complex I. This chain is NADH-ubiquinone oxidoreductase chain 3, found in Rhinoceros unicornis (Greater Indian rhinoceros).